The primary structure comprises 517 residues: Xylosidase/arabinosidase (517 aa).

Asp-15 (proton acceptor) is an active-site residue. The Proton donor role is filled by Glu-185.

This sequence belongs to the glycosyl hydrolase 43 family.

The catalysed reaction is Hydrolysis of (1-&gt;4)-beta-D-xylans, to remove successive D-xylose residues from the non-reducing termini.. It carries out the reaction Hydrolysis of terminal non-reducing alpha-L-arabinofuranoside residues in alpha-L-arabinosides.. Its function is as follows. Has a 1.6-fold higher activity as an arabinosidase than as a beta-xylosidase when tested on the substrates nitrophenyl-beta-D-xylopyranoside and P-nitrophenyl-alpha-L-arabinofuranoside. The protein is Xylosidase/arabinosidase (xylB) of Butyrivibrio fibrisolvens.